A 332-amino-acid polypeptide reads, in one-letter code: Fructose-1,6-bisphosphatase class 1 (332 aa).

Residues E94, D116, L118, and D119 each coordinate Mg(2+). Residues 119–122 (DGSS), N211, Y239, 257–259 (YLY), and K269 contribute to the substrate site. E275 contributes to the Mg(2+) binding site.

This sequence belongs to the FBPase class 1 family. Homotetramer. Mg(2+) serves as cofactor.

It is found in the cytoplasm. It carries out the reaction beta-D-fructose 1,6-bisphosphate + H2O = beta-D-fructose 6-phosphate + phosphate. Its pathway is carbohydrate biosynthesis; Calvin cycle. The polypeptide is Fructose-1,6-bisphosphatase class 1 (Synechococcus sp. (strain JA-2-3B'a(2-13)) (Cyanobacteria bacterium Yellowstone B-Prime)).